The sequence spans 607 residues: 1-deoxy-D-xylulose-5-phosphate synthase (607 aa).

Thiamine diphosphate-binding positions include His63 and 104–106 (GHS). Asp135 contributes to the Mg(2+) binding site. Thiamine diphosphate-binding positions include 136–137 (GA), Asn164, Tyr271, and Glu351. A Mg(2+)-binding site is contributed by Asn164.

The protein belongs to the transketolase family. DXPS subfamily. As to quaternary structure, homodimer. Mg(2+) serves as cofactor. Requires thiamine diphosphate as cofactor.

It carries out the reaction D-glyceraldehyde 3-phosphate + pyruvate + H(+) = 1-deoxy-D-xylulose 5-phosphate + CO2. The protein operates within metabolic intermediate biosynthesis; 1-deoxy-D-xylulose 5-phosphate biosynthesis; 1-deoxy-D-xylulose 5-phosphate from D-glyceraldehyde 3-phosphate and pyruvate: step 1/1. In terms of biological role, catalyzes the acyloin condensation reaction between C atoms 2 and 3 of pyruvate and glyceraldehyde 3-phosphate to yield 1-deoxy-D-xylulose-5-phosphate (DXP). In Campylobacter hominis (strain ATCC BAA-381 / DSM 21671 / CCUG 45161 / LMG 19568 / NCTC 13146 / CH001A), this protein is 1-deoxy-D-xylulose-5-phosphate synthase.